A 431-amino-acid chain; its full sequence is Gamma-glutamyl phosphate reductase (431 aa).

It belongs to the gamma-glutamyl phosphate reductase family.

The protein localises to the cytoplasm. The enzyme catalyses L-glutamate 5-semialdehyde + phosphate + NADP(+) = L-glutamyl 5-phosphate + NADPH + H(+). The protein operates within amino-acid biosynthesis; L-proline biosynthesis; L-glutamate 5-semialdehyde from L-glutamate: step 2/2. In terms of biological role, catalyzes the NADPH-dependent reduction of L-glutamate 5-phosphate into L-glutamate 5-semialdehyde and phosphate. The product spontaneously undergoes cyclization to form 1-pyrroline-5-carboxylate. The chain is Gamma-glutamyl phosphate reductase from Synechococcus elongatus (strain ATCC 33912 / PCC 7942 / FACHB-805) (Anacystis nidulans R2).